Consider the following 21-residue polypeptide: Peptide PGLa-R3 (21 aa).

L21 carries the post-translational modification Leucine amide.

As to expression, expressed by the skin glands.

Its subcellular location is the secreted. In terms of biological role, antimicrobial peptide. The protein is Peptide PGLa-R3 of Xenopus ruwenzoriensis (Uganda clawed frog).